The primary structure comprises 1531 residues: Myosin-17 (1531 aa).

One can recognise a Myosin N-terminal SH3-like domain in the interval 8-57; sequence IVGSHVWIEDPGAAWIDGEVVKINGEEVHAHTTNGKTVVANIANVFPKDT. The Myosin motor domain occupies 62–732; it reads GGVDDMTKLS…QMAELDARRA (671 aa). Residues 156–163 and 209–217 each bind ATP; these read GESGAGKT and NNNSSRFGK. Actin-binding regions lie at residues 495-529, 531-554, 589-613, and 613-635; these read LIEK…YQTF, NYKR…AGEV, FPRL…KLQL, and LQSL…KPNN. IQ domains are found at residues 758 to 787, 783 to 812, 806 to 835, 831 to 860, and 854 to 883; these read LRGA…QAAA, RQAA…STIT, IRHS…MKAA, QMKA…AALS, and LQKA…AARD. Positions 884 to 1056 form a coiled coil; that stretch reads TGALREAKDK…VLRQQALAIS (173 aa). The segment at 1071 to 1090 is disordered; the sequence is LPRTPENGNYLNGGTKTTPD. A compositionally biased stretch (polar residues) spans 1076-1090; the sequence is ENGNYLNGGTKTTPD. Positions 1159–1470 constitute a Dilute domain; sequence DRIIQTIATA…IANMRVMMTE (312 aa). Phosphoserine is present on serine 1517.

It belongs to the TRAFAC class myosin-kinesin ATPase superfamily. Myosin family. Plant myosin class XI subfamily. As to quaternary structure, homodimer. Interacts with MYOB1, MYOB2 and MYOB3. Interacts with PHOX1 and PHOX2. Expressed ubiquitously.

It is found in the cytoplasm. In terms of biological role, myosin heavy chain that is required for the cell cycle-regulated transport of various organelles and proteins for their segregation. Functions by binding with its tail domain to receptor proteins on organelles and exerting force with its N-terminal motor domain against actin filaments, thereby transporting its cargo along polarized actin cables. Involved in the tip growth of root hair cells and in the elongation of trichome stalk and branches. Plays a major role in trafficking of Golgi stacks, mitochondria and peroxisomes during root hair development. Acts as the primary contributor to ER streaming with a major role in the movement of Golgi bodies. Required for development of pavement cells, trichomes, and stigmatic papillae. Together with XI-F, required for the regulation of organ bending, such as gravitropic root bending. This chain is Myosin-17, found in Arabidopsis thaliana (Mouse-ear cress).